We begin with the raw amino-acid sequence, 230 residues long: Probable cobalt-precorrin-2 C(20)-methyltransferase (230 aa).

Belongs to the precorrin methyltransferase family.

The enzyme catalyses Co-precorrin-2 + S-adenosyl-L-methionine = Co-precorrin-3 + S-adenosyl-L-homocysteine + H(+). It participates in cofactor biosynthesis; adenosylcobalamin biosynthesis; cob(II)yrinate a,c-diamide from sirohydrochlorin (anaerobic route): step 2/10. Methylates cobalt-precorrin-2 at the C-20 position to produce cobalt-precorrin-3A in the anaerobic cobalamin biosynthesis pathway. The protein is Probable cobalt-precorrin-2 C(20)-methyltransferase (cbiL) of Methanocaldococcus jannaschii (strain ATCC 43067 / DSM 2661 / JAL-1 / JCM 10045 / NBRC 100440) (Methanococcus jannaschii).